The primary structure comprises 236 residues: MASSVDEEALHQLYLWVDNIPLSRPKRNLSRDFSDGVLVAEVIKFYFPKMVEMHNYVPANSLQQKLSNWGHLNRKVLKRLNFSVPDDVMRKIAQCAPGVVELVLIPLRQRLEERQRRRKQGAGSLQELAPQDGSGYMDVGVSQKARGEGVPDPQGGGQLSWDRPPAPRPPAYNRALQGDPSFVLQIAEKEQELLASQETVQVLQMKVRRLEHLLQLKNVRIEDLSRRLQQAERKQR.

Residues 7–112 form the Calponin-homology (CH) domain; it reads EEALHQLYLW…VLIPLRQRLE (106 aa). Positions 115–176 are disordered; that stretch reads QRRRKQGAGS…PRPPAYNRAL (62 aa). The interval 183-236 is essential for homodimerization and microtubule bundling activity; it reads VLQIAEKEQELLASQETVQVLQMKVRRLEHLLQLKNVRIEDLSRRLQQAERKQR.

In terms of assembly, homodimer. Interacts with actin, TJP1, CGN and CDH1. As to expression, expressed in the intestinal epithelial cells (at protein level).

Its subcellular location is the cytoplasm. The protein localises to the cell projection. The protein resides in the cilium. It localises to the flagellum. It is found in the cytoskeleton. Its subcellular location is the cilium axoneme. The protein localises to the apical cell membrane. The protein resides in the basolateral cell membrane. It localises to the stress fiber. It is found in the microvillus. Its subcellular location is the lamellipodium. The protein localises to the filopodium. Microtubule-associated protein involved in the stabilization of microtubules along the axis of migration during radial intercalation. Promotes the establishment and stabilization of an axis of microtubules required for the active migration of cells into the outer epithelium. Microtubule-associated protein that promotes microtubule bundling and stabilizes microtubules against depolymerization in response to cold shock. Essential for ciliary central apparatus formation which requires both its microtubule-binding and bundling activities and for ciliary localization of HYDIN and SPAG6 in ependymal cilia. Binds actin in intestinal epithelial cells (IECs), essential for IECs survival and contributes to formation of filopodia and lamellipodia in migrating IECs. Regulates planar cell polarity signaling pathway and asymmetric microtubule accumulation in ciliated epithelia. This is Sperm flagellar protein 1 (SPEF1) from Homo sapiens (Human).